The chain runs to 100 residues: Small ribosomal subunit protein uS14 (100 aa).

It belongs to the universal ribosomal protein uS14 family. As to quaternary structure, part of the 30S ribosomal subunit. Contacts proteins S3 and S10.

In terms of biological role, binds 16S rRNA, required for the assembly of 30S particles and may also be responsible for determining the conformation of the 16S rRNA at the A site. In Prochlorococcus marinus (strain MIT 9211), this protein is Small ribosomal subunit protein uS14.